The chain runs to 629 residues: MKEDQNYKTAFGSQNSRDTHRHEISFPSQNWSLEMLLRRLKAIDARRDDKFASVMDAIGEFGTFQWRLVVLTFIPSILSTFFIFSHHFLLTAQRPYCNTSWILEVGPNLTEDEQLNLTLPRAPNGSFLTCLMYIPVPWDLDSIIHFGLNYTETCKFGWIYPFAHTRSLINEFDLVCGNEPNKENGLTVFLSGVLTGSLLFGFLSDKLGRYPIILLSLLGFLIFGFGTAFVSSFYQYLFFRFFVAQASVGYAICSVSLVMEWLVGEHRAQAVILQHSFLTIGVILLTGLAYKVVHWRLLCLLGGMPMFPLICNIWVLRESPRWLMVRGKVEEAKKVLCYAAEVNKKTIPLNLLNELQISGKKVAKASILDFCTNQHLFKVVLAIGCVWFTVSYISFTLNLKMNDFGLDVYFVQMVRSIVAVPARLCCIILLEYFGRKWALNLTLFLVTSMCLFLLFLPQEPKSTIILTLMLAEFSMAGTLSIFFIYTAELLPTVLRSTGLGMVSLAWVAGAISSVAIFKQTKTQLPIFFCCLCCVLALCFSSLVPETGSQSLRDSIEYNIRDSIEPKDRNKDVPMVIAEESMSDIVADSEVTNTTLNAVTFKPEENSLLNMTLEVPKMDLPVQSLKAQPP.

The segment at 1 to 21 (MKEDQNYKTAFGSQNSRDTHR) is disordered. Residues 1–67 (MKEDQNYKTA…IGEFGTFQWR (67 aa)) are Cytoplasmic-facing. Over residues 7 to 16 (YKTAFGSQNS) the composition is skewed to polar residues. A helical transmembrane segment spans residues 68-88 (LVVLTFIPSILSTFFIFSHHF). Topologically, residues 89 to 183 (LLTAQRPYCN…LVCGNEPNKE (95 aa)) are extracellular. N98, N116, N124, and N149 each carry an N-linked (GlcNAc...) asparagine glycan. A helical membrane pass occupies residues 184 to 204 (NGLTVFLSGVLTGSLLFGFLS). The Cytoplasmic segment spans residues 205 to 209 (DKLGR). A helical transmembrane segment spans residues 210–230 (YPIILLSLLGFLIFGFGTAFV). Over 231 to 240 (SSFYQYLFFR) the chain is Extracellular. The chain crosses the membrane as a helical span at residues 241-261 (FFVAQASVGYAICSVSLVMEW). Residues 262–269 (LVGEHRAQ) are Cytoplasmic-facing. Residues 270–290 (AVILQHSFLTIGVILLTGLAY) form a helical membrane-spanning segment. Residues 291–295 (KVVHW) lie on the Extracellular side of the membrane. Residues 296–316 (RLLCLLGGMPMFPLICNIWVL) form a helical membrane-spanning segment. Topologically, residues 317-378 (RESPRWLMVR…DFCTNQHLFK (62 aa)) are cytoplasmic. A helical membrane pass occupies residues 379-399 (VVLAIGCVWFTVSYISFTLNL). Residues 400–409 (KMNDFGLDVY) are Extracellular-facing. Residues 410-430 (FVQMVRSIVAVPARLCCIILL) traverse the membrane as a helical segment. Over 431–436 (EYFGRK) the chain is Cytoplasmic. A helical transmembrane segment spans residues 437–457 (WALNLTLFLVTSMCLFLLFLP). The Extracellular portion of the chain corresponds to 458–463 (QEPKST). The helical transmembrane segment at 464-484 (IILTLMLAEFSMAGTLSIFFI) threads the bilayer. Residues 485–496 (YTAELLPTVLRS) are Cytoplasmic-facing. A helical transmembrane segment spans residues 497–517 (TGLGMVSLAWVAGAISSVAIF). Residues 518–523 (KQTKTQ) are Extracellular-facing. A helical transmembrane segment spans residues 524–544 (LPIFFCCLCCVLALCFSSLVP). Topologically, residues 545–629 (ETGSQSLRDS…PVQSLKAQPP (85 aa)) are cytoplasmic.

Belongs to the major facilitator (TC 2.A.1) superfamily. Organic cation transporter (TC 2.A.1.19) family. As to expression, testis-specific (at protein level). Specifically expressed in male germ cells (at protein level).

It localises to the mitochondrion inner membrane. Its subcellular location is the cell projection. The protein resides in the cilium. It is found in the flagellum membrane. The enzyme catalyses riboflavin(in) = riboflavin(out). Its function is as follows. Riboflavin transporter localized at the inner mitochondrial membrane of the spermatozoa midpiece, which is required for male fertility. SLC22A14-mediated riboflavin transport is essential for spermatozoa energy generation and motility: riboflavin is the precursor of FMN and FAD, which are coenzymes of many enzymes in the TCA cycle (the citric acid cycle) in mitochondria. Required for sperm motility and normal sperm flagellar structure. The sequence is that of Solute carrier family 22 member 14 from Mus musculus (Mouse).